Here is a 318-residue protein sequence, read N- to C-terminus: Ankyrin repeat and SOCS box protein 7 (318 aa).

7 ANK repeats span residues 13–42 (QEELQIQAAVAAGDVHTVRKMLEQGYSPNG), 46–75 (NGWTLLHFSAARGKERCVRVFLEHGADPTV), 80–109 (GGFTALHYAAMHGRARIARLMLESEYRSDI), 116–145 (DGWTPLHVAAHYGRDSFVRLLLEFKAEVDP), 149–178 (KGTTPLQLAIIRERSSCVKILLDHNANIDI), 180–208 (NGFLLRYAVIKSNHSYCRMFLQRGADTDL), and 213–242 (DGQTPLHLSALRDDVLCARMLYNYGADTNT). The region spanning 265 to 318 (LDFLQEVTRQPRNLQDLCRIKIRQCIGLQNLKLLDELPIAKVMKDYLKHKFDDI) is the SOCS box domain.

Belongs to the ankyrin SOCS box (ASB) family. Interacts with CUL5. Interacts with RNF7. Interacts with PSRC1.

It participates in protein modification; protein ubiquitination. Functionally, probable substrate-recognition component of a SCF-like ECS (Elongin-Cullin-SOCS-box protein) E3 ubiquitin-protein ligase complex which mediates the ubiquitination and subsequent proteasomal degradation of target proteins. Plays a role in spindle dynamics and genome integrity by targeting the mitotic progression protein PSRC1 for proteasomal degradation in a cell cycle-dependent manner. Also participates in meiosis by mediating the proper attachment between kinetochores and microtubules. In Macaca fascicularis (Crab-eating macaque), this protein is Ankyrin repeat and SOCS box protein 7 (ASB7).